We begin with the raw amino-acid sequence, 6548 residues long: Epiplakin (6548 aa).

T33 carries the post-translational modification Phosphothreonine. Plectin repeat units lie at residues 41–78, 79–116, 117–154, 155–192, 285–322, 323–360, 362–398, 399–436, and 437–470; these read AALP…TGLG, LTLL…LELK, EKLL…RTLG, WRLL…KETW, RRYL…KGIA, LQLL…PELH, QLLV…QPLA, LRLL…EETR, and QRLS…PETG. The tract at residues 49–1123 is interaction with KRT5; that stretch reads SIAGVYVEAS…KASGLHLLPL (1075 aa). Residues 545 to 565 adopt a coiled-coil conformation; sequence SVEELAAELKNIVEQAAATAK. Plectin repeat units follow at residues 611–648, 649–686, 687–724, 725–762, and 766–800; these read QRYL…PGTA, LILL…PDVY, AKLL…RDHG, IRLL…QILN, and LDPS…SETG. Positions 851–886 form a coiled coil; sequence TEDRRRQLLQRYRQRKITLEQVTQLLEKEMRRWTDI. Plectin repeat units follow at residues 931–968, 969–1006, 1007–1044, 1224–1284, 1285–1322, 1323–1360, 1361–1398, and 1402–1436; these read HRYL…PSTA, LALL…AEVY, GKLK…VEQA, QETL…TGLG, QQLL…MEQS, EHLR…QSEA, FPLL…EQTS, and TATG…ADTG. At T1551 the chain carries Phosphothreonine. Plectin repeat units follow at residues 1572-1609, 1610-1647, 1648-1685, 1686-1723, and 1727-1761; these read RRSL…PGTA, LVLL…KETY, MKLL…RDHG, IRLL…EEMN, and SDPS…PETG. Positions 1580–6545 are interaction with KRT5; the sequence is FIAGVLIQDT…PETGLLFLSL (4966 aa). A coiled-coil region spans residues 1819–1851; that stretch reads RKLLREYRAQNIGLENLLEVITSTVEETEKQSQ. 9 Plectin repeats span residues 1898–1935, 1936–1973, 1974–2011, 2012–2049, 2225–2267, 2268–2305, 2306–2343, 2344–2381, and 2385–2419; these read RVYL…AGFA, AQML…EDLR, ERLV…REEA, LRLL…DDSL, KRYL…PGTA, LVLL…GEIQ, EKLL…RDHG, IRLL…EDMN, and ADPG…PETG. Phosphoserine is present on residues S2430 and S2508. Residues 2578 to 2626 are disordered; sequence AEETQESKPKPRDASLKQQDTGARGSGTSPDEGDAQDSSESARQQQEQT. Residues 2582–2592 are compositionally biased toward basic and acidic residues; that stretch reads QESKPKPRDAS. Composition is skewed to polar residues over residues 2593 to 2606 and 2615 to 2626; these read LKQQ…SGTS and SSESARQQQEQT. 5 Plectin repeats span residues 2740 to 2782, 2783 to 2820, 2821 to 2858, 2859 to 2896, and 2900 to 2934; these read KRYL…PGTA, LVLL…GEIQ, EKLL…RDHG, IRLL…EDMN, and ADPG…PETG. The tract at residues 2748–2940 is interaction with KRT14; that stretch reads CIAGVLVPVQ…PETGFYMLQL (193 aa). The interval 3093 to 3144 is disordered; the sequence is AEETQESKPKPRDASLKQQDTGARGSGTSPDEGDAQDSSESARQQQEQTLRA. Basic and acidic residues predominate over residues 3097-3107; it reads QESKPKPRDAS. Polar residues-rich tracts occupy residues 3108–3121 and 3130–3144; these read LKQQ…SGTS and SSES…TLRA. S3220 bears the Phosphoserine mark. 5 Plectin repeats span residues 3255-3297, 3298-3335, 3336-3373, 3374-3411, and 3415-3449; these read KRYL…PGTA, LVLL…GEIQ, EKLL…RDHG, IRLL…EDMN, and ADPG…PETG. A phosphoserine mark is found at S3460 and S3538. The interval 3608–3659 is disordered; it reads AEETQESKPKPRDASLKQQDTGARGSGTSPDEGDAQDSSESARQQQEQTLRA. A compositionally biased stretch (basic and acidic residues) spans 3612 to 3622; that stretch reads QESKPKPRDAS. Polar residues-rich tracts occupy residues 3623–3636 and 3645–3659; these read LKQQ…SGTS and SSES…TLRA. S3735 carries the phosphoserine modification. Plectin repeat units lie at residues 3770 to 3812, 3813 to 3850, 3851 to 3888, 3889 to 3926, and 3930 to 3964; these read KRYL…PGTA, LVLL…GEIQ, EKLL…RDHG, IRLL…EDMN, and ADPG…PETG. Phosphoserine occurs at positions 3975 and 4053. A disordered region spans residues 4123 to 4174; that stretch reads AEETQESKPKPRDASLKQQDTGARGSGTSPDEGDAQDSSESARQQQEQTLRA. Over residues 4127-4137 the composition is skewed to basic and acidic residues; sequence QESKPKPRDAS. Composition is skewed to polar residues over residues 4138 to 4151 and 4160 to 4174; these read LKQQ…SGTS and SSES…TLRA. Plectin repeat units follow at residues 4285–4327, 4328–4365, 4366–4403, 4404–4441, and 4445–4479; these read KRYL…PGTA, LVLL…GEIQ, EKLL…RDHG, IRLL…EDMN, and ADPG…PETG. The interval 4638-4689 is disordered; the sequence is AEETQESKPKPRDASLKQQDTGARGSGTSPDEGDAQDSSESARQQQEQTLRA. Residues 4642-4652 are compositionally biased toward basic and acidic residues; that stretch reads QESKPKPRDAS. Composition is skewed to polar residues over residues 4653-4666 and 4675-4689; these read LKQQ…SGTS and SSES…TLRA. S4765 carries the post-translational modification Phosphoserine. Plectin repeat units lie at residues 4800–4842, 4843–4880, 4881–4918, 4919–4956, and 4960–4994; these read KRYL…PGTA, LVLL…GEIQ, EKLL…RDHG, IRLL…EDMN, and ADPG…PETG. 2 positions are modified to phosphoserine: S5005 and S5083. Residues 5153–5204 are disordered; the sequence is AEETQESKPKPRDASLKQQDTGARGSGTSPDEGDAQDSSESARQQQEQTLRA. Basic and acidic residues predominate over residues 5157–5167; sequence QESKPKPRDAS. 2 stretches are compositionally biased toward polar residues: residues 5168–5181 and 5190–5204; these read LKQQ…SGTS and SSES…TLRA. Plectin repeat units lie at residues 5315-5357, 5358-5395, 5396-5433, 5434-5471, and 5475-5509; these read KRYL…PGTA, LVLL…GEIQ, EKLL…RDHG, IRLL…EDMN, and ADPG…PETG. Residues 5668–5719 are disordered; it reads AEETQESKPKPRDASLKQQDTGARGSGTSPDEGDAQDSSESARQQQEQTLRA. Basic and acidic residues predominate over residues 5672–5682; the sequence is QESKPKPRDAS. Polar residues-rich tracts occupy residues 5683–5696 and 5705–5719; these read LKQQ…SGTS and SSES…TLRA. A Phosphoserine modification is found at S5795. 5 Plectin repeats span residues 5830 to 5872, 5873 to 5910, 5911 to 5948, 5949 to 5986, and 5990 to 6024; these read KRYL…PGTA, LVLL…GEIQ, EKLL…RDHG, IRLL…EDMN, and ADPG…PETG. S6035 and S6113 each carry phosphoserine. Residues 6183 to 6234 form a disordered region; the sequence is AEETQESKPKPRDASLKQQDTGARGSGTSPDEGDAQDSSESARQQQEQTLRA. Over residues 6187 to 6197 the composition is skewed to basic and acidic residues; the sequence is QESKPKPRDAS. Composition is skewed to polar residues over residues 6198-6211 and 6220-6234; these read LKQQ…SGTS and SSES…TLRA. A Phosphoserine modification is found at S6310. Plectin repeat units follow at residues 6345-6387, 6388-6425, 6426-6463, 6464-6501, and 6505-6539; these read KRYL…PGTA, LVLL…GEIQ, EKLL…KNHG, IRLL…QEMN, and ADPG…PETG.

This sequence belongs to the plakin or cytolinker family. As to quaternary structure, interacts with KRT5, KRT14 and KRT5/KRT14 heterotetramer; interacts preferentially with assembled filaments rather than keratin monomers. Interacts with KRT8 and KRT18 and KRT8/KRT18 heterotetramer; interacts preferentially with assembled filaments rather than keratin monomers. Interacts with KRT1, VIM and DES; interaction is stronger with KRT1 than with VIM or DES; interaction is dependent of higher-order structure of intermediate filament. As to expression, high levels in skin, small intestine and salivary gland. Lower levels in lung, uterus and liver. Not detected in brain, kidney, muscle, heart or spleen. In skin, expressed in all epidermal layers but not in the dermis. In intestine, expressed exclusively in the epithelial cell layer of the villi. In liver, expressed at hepatocyte margins. Around the region of the wound, expressed in the upper half of the epidermis. Weakly expressed on the basilar side of the suprabasal layer of the epidermis at the wound's edge. Expressed strongly in the upper layer of the epidermis, especially in larger keratinocytes. Expressed in undifferentiated primary keratinocytes. Strongly expressed in ductal cells, and also expressed in acinar cells. Expressed in hepatocytes and cholangiocytes.

Its subcellular location is the cytoplasm. The protein resides in the cytoskeleton. It localises to the apicolateral cell membrane. It is found in the basolateral cell membrane. The protein localises to the cell junction. Its subcellular location is the hemidesmosome. The protein resides in the tight junction. It localises to the cell projection. In terms of biological role, cytoskeletal linker protein that connects to intermediate filaments and controls their reorganization in response to stress. In response to mechanical stress like wound healing, is associated with the machinery for cellular motility by slowing down keratinocyte migration and proliferation and accelerating keratin bundling in proliferating keratinocytes thus contributing to tissue architecture. However in wound healing in corneal epithelium also positively regulates cell differentiation and proliferation and negatively regulates migration thereby controlling corneal epithelium morphogenesis and integrity. In response to cellular stress, plays a role in keratin filament reorganization, probably by protecting keratin filaments against disruption. During liver and pancreas injuries, plays a protective role by chaperoning disease-induced intermediate filament reorganization. The protein is Epiplakin of Mus musculus (Mouse).